A 409-amino-acid chain; its full sequence is MSNAPKIKVSGPVVELDGDEMTRVIWKLIKDMLILPYLDIRLDYYDLGIEHRDATDDQVTIDAAYAIKKHGVGVKCATITPDEARVEEFNLKKMWLSPNGTIRNILGGTIFREPIVISNVPRLVPGWTKPIVIGRHAFGDQYRATNFKVDQPGTVTLTFTPADGSAPIVHEMVSIPEDGGVVLGMYNFKESIRDFARASFSYGLNAKWPVYLSTKNTILKAYDGMFKDEFERVYEEEFKAQFEAAGLTYEHRLIDDMVAACLKWEGGYVWACKNYDGDVQSDTVAQGYGSLGLMTSVLMTADGKTVEAEAAHGTVTRHYRQYQAGKPTSTNPIASIFAWTRGLQHRGKLDGTPEVIDFAHKLESVVIATVESGKMTKDLAILIGPEQDWLNSEEFLDAIADNLEKELAN.

NADP(+)-binding residues include Lys75, Thr78, Thr80, and Arg85. Positions 255, 278, and 282 each coordinate Mn(2+). NADP(+) contacts are provided by Gly313, Thr314, Val315, His318, and Asn331.

Belongs to the isocitrate and isopropylmalate dehydrogenases family. As to quaternary structure, homodimer. Mg(2+) serves as cofactor. It depends on Mn(2+) as a cofactor.

It catalyses the reaction D-threo-isocitrate + NADP(+) = 2-oxoglutarate + CO2 + NADPH. Catalyzes the oxidative decarboxylation of isocitrate to 2-oxoglutarate and carbon dioxide with the concomitant reduction of NADP(+). This chain is Isocitrate dehydrogenase [NADP] 1 (icd), found in Mycobacterium bovis (strain ATCC BAA-935 / AF2122/97).